The chain runs to 936 residues: Aftiphilin (936 aa).

The disordered stretch occupies residues 1 to 36; the sequence is MEPDIIRMYSSSPPPLDNGAEDDDDDEFGEFGGFSE. Residues 1–523 form an interaction with AP1G1, AP1G2, GGA1 and GGA3 region; sequence MEPDIIRMYS…ARKSSGTGTE (523 aa). Over residues 19 to 29 the composition is skewed to acidic residues; sequence GAEDDDDDEFG. Positions 28 to 31 match the WXXF motif 1 motif; it reads FGEF. Ser151 bears the Phosphoserine mark. Disordered regions lie at residues 197–216 and 374–409; these read TDDL…STHS and KTSD…LDDS. Basic and acidic residues predominate over residues 374–389; it reads KTSDDEVGSPKEESRK. The segment at 386–610 is interaction with AP1G1; it reads ESRKFTNFQS…EAWQSHRTDE (225 aa). At Ser395 the chain carries Phosphoserine. The WXXF motif 2 signature appears at 432-435; the sequence is FGDF. The WXXF motif 3 (partial) signature appears at 436–438; it reads GDF. A WXXF motif 4 motif is present at residues 478–481; the sequence is FGEF. Ser518 bears the Phosphoserine mark. The interval 589–637 is disordered; that stretch reads GDQQATESHHRKEAWQSHRTDENIDTPGTPKTHSVPSATSKGAVASGHL. A compositionally biased stretch (basic and acidic residues) spans 595-610; that stretch reads ESHHRKEAWQSHRTDE. Thr617 is modified (phosphothreonine). The span at 617–628 shows a compositional bias: polar residues; it reads TPKTHSVPSATS. The CLTCL1/Clathrin-binding signature appears at 716–718; the sequence is YQW. The interval 825 to 829 is clathrin-binding; the sequence is LLNLD.

In terms of assembly, self-associates. Interacts with GGA1 (via GAE domain). Interacts with GGA3 (via GAE domain), AP1G1 (via GAE domain) and AP1G2 (via GAE domain). Component of the aftiphilin/p200/gamma-synergin complex, at least composed of AFTPH/aftiphilin, HEATR5B/p200a and SYNRG/gamma-synergin, which plays a role in the AP1G1/AP-1-mediated protein trafficking from early to recycling endosomes. Within the complex interacts with HEATR5B/p200a and SYNRG/gamma-synergin; the interactions are direct. Interacts with AP1G1/AP-1; the interaction is required to recruit AFTPH/aftiphilin to the perinuclear region of the cell. Interacts with CLTCL1/Clathrin.

The protein localises to the cytoplasm. It is found in the perinuclear region. It localises to the cytoplasmic vesicle. The protein resides in the clathrin-coated vesicle. In terms of biological role, component of clathrin-coated vesicles. Component of the aftiphilin/p200/gamma-synergin complex, which plays roles in AP1G1/AP-1-mediated protein trafficking including the trafficking of transferrin from early to recycling endosomes, and the membrane trafficking of furin and the lysosomal enzyme cathepsin D between the trans-Golgi network (TGN) and endosomes. In Homo sapiens (Human), this protein is Aftiphilin (AFTPH).